The chain runs to 225 residues: Small ribosomal subunit protein uS2 (225 aa).

The span at methionine 1–alanine 14 shows a compositional bias: basic and acidic residues. The disordered stretch occupies residues methionine 1–glycine 33.

The protein belongs to the universal ribosomal protein uS2 family.

The chain is Small ribosomal subunit protein uS2 from Methanosarcina barkeri (strain Fusaro / DSM 804).